The chain runs to 255 residues: MEFSDELLASLRDARHIAVFTGAGVSAESGIPTFRDALTGFWENYDASTLASPEGFAADPALVWGWYEWRRTRVLRAEPNPAHYAIAALAADCPRLTLITQNVDDLHERAGSADPIRLHGSLHHPRCSACEAPYRLPPGIPDEPEGGRRVDPPRCARCGAPVRPGVVWLGENLPQAAWDAARQAAEDCDLMFSIGTSALVWPAAQLPALVARRGATVVQVNPAETALDGHAGYNLRGAAGKVMPLLLQALRRSRP.

In terms of domain architecture, Deacetylase sirtuin-type spans 1-253; sequence MEFSDELLAS…PLLLQALRRS (253 aa). 22 to 42 contributes to the NAD(+) binding site; sequence GAGVSAESGIPTFRDALTGFW. Residues Tyr-67 and Arg-70 each contribute to the substrate site. 101 to 104 provides a ligand contact to NAD(+); sequence QNVD. The active-site Proton acceptor is the His-119. Zn(2+)-binding residues include Cys-127, Cys-130, Cys-155, and Cys-158. Residues 195 to 197, 221 to 223, and Ala-239 each bind NAD(+); these read GTS and NPA.

Belongs to the sirtuin family. Class III subfamily. Zn(2+) serves as cofactor.

Its subcellular location is the cytoplasm. It carries out the reaction N(6)-acetyl-L-lysyl-[protein] + NAD(+) + H2O = 2''-O-acetyl-ADP-D-ribose + nicotinamide + L-lysyl-[protein]. The catalysed reaction is N(6)-succinyl-L-lysyl-[protein] + NAD(+) + H2O = 2''-O-succinyl-ADP-D-ribose + nicotinamide + L-lysyl-[protein]. NAD-dependent lysine deacetylase and desuccinylase that specifically removes acetyl and succinyl groups on target proteins. Modulates the activities of several proteins which are inactive in their acylated form. This is NAD-dependent protein deacylase from Methylococcus capsulatus (strain ATCC 33009 / NCIMB 11132 / Bath).